The following is a 248-amino-acid chain: 3-deoxy-manno-octulosonate cytidylyltransferase (248 aa).

This sequence belongs to the KdsB family.

Its subcellular location is the cytoplasm. It carries out the reaction 3-deoxy-alpha-D-manno-oct-2-ulosonate + CTP = CMP-3-deoxy-beta-D-manno-octulosonate + diphosphate. Its pathway is nucleotide-sugar biosynthesis; CMP-3-deoxy-D-manno-octulosonate biosynthesis; CMP-3-deoxy-D-manno-octulosonate from 3-deoxy-D-manno-octulosonate and CTP: step 1/1. The protein operates within bacterial outer membrane biogenesis; lipopolysaccharide biosynthesis. Its function is as follows. Activates KDO (a required 8-carbon sugar) for incorporation into bacterial lipopolysaccharide in Gram-negative bacteria. The chain is 3-deoxy-manno-octulosonate cytidylyltransferase from Escherichia coli O139:H28 (strain E24377A / ETEC).